The following is a 199-amino-acid chain: GTP-binding protein Di-Ras2 (199 aa).

GTP is bound by residues 14–21 (GAGGVGKS), 33–39 (RESYIPT), 61–65 (DTTGS), and 121–124 (NKCD). Position 35 is a phosphoserine (S35). The Effector region motif lies at 36-44 (YIPTVEDTY). S126 carries the phosphoserine modification. Residue 152 to 153 (AK) coordinates GTP. Cysteine methyl ester is present on C196. A lipid anchor (S-geranylgeranyl cysteine) is attached at C196. Residues 197–199 (VVM) constitute a propeptide, removed in mature form.

This sequence belongs to the small GTPase superfamily. Di-Ras family. Post-translationally, ubiquitinated by the ECS(ASB11) complex via 'Lys-11'-linked ubiquitin chains, leading to its degradation by the proteasome.

The protein localises to the cell membrane. The enzyme catalyses GTP + H2O = GDP + phosphate + H(+). In terms of biological role, displays low GTPase activity and exists predominantly in the GTP-bound form. The protein is GTP-binding protein Di-Ras2 (Diras2) of Mus musculus (Mouse).